The chain runs to 208 residues: Histone 24 (208 aa).

The residue at position 2 (S2) is an N-acetylserine. Residue K14 is modified to N6-methyllysine. One can recognise an H15 domain in the interval 37–113; that stretch reads AHPPYINMIK…GANGRFRVPE (77 aa). The disordered stretch occupies residues 101–208; the sequence is AGSGANGRFR…KKAAKPAAKA (108 aa). Low complexity predominate over residues 114 to 138; it reads KAAAAKKPAAAKKPAAAKKPAAAKK. Composition is skewed to basic residues over residues 144-155 and 162-202; these read KAKKPAAAKPKK and KVKK…KKAA.

Belongs to the histone H1/H5 family. As to quaternary structure, interacts with nmad-1. Interacts (when monomethylated at Lys-14) with chromobox protein homolog hpl-1; the interaction is direct. Interacts (when monomethylated at Lys-14) with histone H3 (when trimethylated on 'Lys-27'); the interaction is direct. Post-translationally, methylation at lysine 14 is necessary to regulate male tail development.

It localises to the nucleus. The protein localises to the chromosome. The protein resides in the cytoplasm. Histones H1 are necessary for the condensation of nucleosome chains into higher-order structures. Probably does not act as global transcriptional repressor. Acting in concert with chromobox protein homologs hpl-1 and hpl-2, involved in reproduction, somatic gonad development, male tail development, and vulval cell fate decisions; perhaps as a result of modulating expression of Hox genes mab-5 and egl-5. Plays a role in linking epigenetic regulation with the innate immune response. This chain is Histone 24, found in Caenorhabditis elegans.